Consider the following 337-residue polypeptide: Protein-arginine kinase (337 aa).

The Phosphagen kinase C-terminal domain maps to 12-240 (IVIASKVKIL…NKLILREKNQ (229 aa)). Residues 15-19 (ASKVK), 162-166 (RAKVF), and 193-198 (KSIYNS) each bind ATP.

Belongs to the ATP:guanido phosphotransferase family.

It catalyses the reaction L-arginyl-[protein] + ATP = N(omega)-phospho-L-arginyl-[protein] + ADP + H(+). Catalyzes the specific phosphorylation of arginine residues in proteins. In Clostridium perfringens (strain ATCC 13124 / DSM 756 / JCM 1290 / NCIMB 6125 / NCTC 8237 / Type A), this protein is Protein-arginine kinase.